Reading from the N-terminus, the 564-residue chain is R-linalool synthase (564 aa).

Mg(2+) contacts are provided by D320, D324, D464, T468, and E472. The short motif at 320–324 (DDVYD) is the DDXXD motif element.

It belongs to the terpene synthase family. The cofactor is Mg(2+). Mn(2+) is required as a cofactor.

It carries out the reaction (2E)-geranyl diphosphate + H2O = (R)-linalool + diphosphate. Functionally, specifically catalyzes production of (R)-(-)-linalool, the main component of lavender essential oil. This Lavandula angustifolia (Lavender) protein is R-linalool synthase.